A 210-amino-acid polypeptide reads, in one-letter code: Guanylate kinase (210 aa).

Residues 8-188 form the Guanylate kinase-like domain; it reads GNLFIIAAPS…SLASLEHIVL (181 aa). 15-22 is a binding site for ATP; it reads APSGAGKS.

It belongs to the guanylate kinase family.

Its subcellular location is the cytoplasm. It catalyses the reaction GMP + ATP = GDP + ADP. Essential for recycling GMP and indirectly, cGMP. The sequence is that of Guanylate kinase from Idiomarina loihiensis (strain ATCC BAA-735 / DSM 15497 / L2-TR).